Consider the following 225-residue polypeptide: Putative 5'-nucleotidase alr3139 (225 aa).

Aspartate 8, aspartate 9, serine 37, and asparagine 88 together coordinate a divalent metal cation.

This sequence belongs to the SurE nucleotidase family. It depends on a divalent metal cation as a cofactor.

The protein resides in the cytoplasm. It catalyses the reaction a ribonucleoside 5'-phosphate + H2O = a ribonucleoside + phosphate. Its function is as follows. Nucleotidase that shows phosphatase activity on nucleoside 5'-monophosphates. This Synechocystis sp. (strain ATCC 27184 / PCC 6803 / Kazusa) protein is Putative 5'-nucleotidase alr3139.